A 341-amino-acid chain; its full sequence is Anthranilate phosphoribosyltransferase (341 aa).

5-phospho-alpha-D-ribose 1-diphosphate-binding positions include Gly79, 82 to 83, Thr87, 89 to 92, 107 to 115, and Ala119; these read GD, NIST, and KHGNRAASS. An anthranilate-binding site is contributed by Gly79. Ser91 contributes to the Mg(2+) binding site. Asn110 serves as a coordination point for anthranilate. Arg165 contacts anthranilate. Asp224 and Glu225 together coordinate Mg(2+).

Belongs to the anthranilate phosphoribosyltransferase family. Homodimer. It depends on Mg(2+) as a cofactor.

It carries out the reaction N-(5-phospho-beta-D-ribosyl)anthranilate + diphosphate = 5-phospho-alpha-D-ribose 1-diphosphate + anthranilate. It functions in the pathway amino-acid biosynthesis; L-tryptophan biosynthesis; L-tryptophan from chorismate: step 2/5. In terms of biological role, catalyzes the transfer of the phosphoribosyl group of 5-phosphorylribose-1-pyrophosphate (PRPP) to anthranilate to yield N-(5'-phosphoribosyl)-anthranilate (PRA). The sequence is that of Anthranilate phosphoribosyltransferase from Lacticaseibacillus casei (strain BL23) (Lactobacillus casei).